We begin with the raw amino-acid sequence, 435 residues long: Probable histidine--tRNA ligase, cytoplasmic (435 aa).

The protein belongs to the class-II aminoacyl-tRNA synthetase family.

Its subcellular location is the cytoplasm. It carries out the reaction tRNA(His) + L-histidine + ATP = L-histidyl-tRNA(His) + AMP + diphosphate + H(+). In Encephalitozoon cuniculi (strain GB-M1) (Microsporidian parasite), this protein is Probable histidine--tRNA ligase, cytoplasmic.